The chain runs to 455 residues: Vimentin (455 aa).

Positions 1–87 are head; sequence MASRTNTSSY…GLADAINTEF (87 aa). Positions 87 to 122 form a coiled coil; it reads FKTNRTNEKAEMQHLNDRFASYIDKVRFLEQQNKIL. A coil 1A region spans residues 88 to 122; that stretch reads KTNRTNEKAEMQHLNDRFASYIDKVRFLEQQNKIL. The IF rod domain occupies 94–402; the sequence is EKAEMQHLND…KLLEGEESRI (309 aa). The tract at residues 123–144 is linker 1; it reads IAELEQMRGKGSSRVGDLYQDE. A coiled-coil region spans residues 145-236; the sequence is MRELRRQVDQ…KLHDEELAEL (92 aa). The segment at 145–236 is coil 1B; that stretch reads MRELRRQVDQ…KLHDEELAEL (92 aa). A linker 12 region spans residues 237–259; that stretch reads QIQIQEQHVQIDMEVAKPDLTAA. Positions 260–398 are coil 2; it reads LKDVRQQYET…ATYRKLLEGE (139 aa). A coiled-coil region spans residues 294-398; that stretch reads ARNNEAIRLA…ATYRKLLEGE (105 aa). The interval 399-455 is tail; the sequence is ESRITTPFPNLSSLTLRETMKETRPAMDSLSKKVVIKTIETRDGHIINESSQNDDLE.

This sequence belongs to the intermediate filament family. In terms of assembly, homomer assembled from elementary dimers. One of the most prominent phosphoproteins in various cells of mesenchymal origin. Phosphorylation is enhanced during cell division, at which time vimentin filaments are significantly reorganized.

Its subcellular location is the cytoplasm. It is found in the cytoskeleton. The protein localises to the nucleus matrix. Vimentins are class-III intermediate filaments found in various non-epithelial cells, especially mesenchymal cells. Vimentin is attached to the nucleus, endoplasmic reticulum, and mitochondria, either laterally or terminally. The polypeptide is Vimentin (vim) (Cyprinus carpio (Common carp)).